A 309-amino-acid chain; its full sequence is MGINFDVSRPKARSSINMTTKFHTIGLIGKPHHQGTNQTLKRLHHWLTMQGFEVLVEERVAAELGPNIEAVDLLEIGARCDLAIVVGGDGNMLGAARVLARFDLGVIGVNRGNLGFLTDLPPDAFEEALAKVLDGEFDTEHRFLLEAEVYRHGMLKASNTAVNEAVLHPGKIAHMIEFEVYIDDQFMYSQRADGMIVSTPTGSTAYALSAGGAILTPNLQALILVPMFPHTLSCRPIVVDACSTIKMVVSPDNGENLEVSCDGHVHLAVLPGDEIIVRRSSERLRLIHPKGHNYFHVLRTKLGWGSKLF.

The Proton acceptor role is filled by Asp-89. NAD(+) is bound by residues 89-90, 163-164, His-174, Arg-191, Asp-193, and 204-209; these read DG, NE, and TAYALS.

It belongs to the NAD kinase family. Requires a divalent metal cation as cofactor.

It is found in the cytoplasm. It carries out the reaction NAD(+) + ATP = ADP + NADP(+) + H(+). Functionally, involved in the regulation of the intracellular balance of NAD and NADP, and is a key enzyme in the biosynthesis of NADP. Catalyzes specifically the phosphorylation on 2'-hydroxyl of the adenosine moiety of NAD to yield NADP. The polypeptide is NAD kinase (Shewanella baltica (strain OS155 / ATCC BAA-1091)).